A 343-amino-acid polypeptide reads, in one-letter code: Alpha-tocopherol transfer protein-like (343 aa).

Residues 1–29 are disordered; it reads MSEESDSLRTSPSVASLSENELPLPPPDP. Residues 8–19 are compositionally biased toward polar residues; sequence LRTSPSVASLSE. Residues 118–283 form the CRAL-TRIO domain; that stretch reads RPSALKDVLN…EYGGTAGELD (166 aa).

May act as a protein that binds a hydrophobic ligand. In Mus musculus (Mouse), this protein is Alpha-tocopherol transfer protein-like (Ttpal).